We begin with the raw amino-acid sequence, 83 residues long: MKTSMFLTLTGLVLLFVDCYASESEEKEFPKELLSSIFAADSDFKVEERGCLGDKCDYNNGCCSGYVCSRTWKWCVLAGPWRR.

An N-terminal signal peptide occupies residues 1 to 21 (MKTSMFLTLTGLVLLFVDCYA). The propeptide occupies 22–49 (SESEEKEFPKELLSSIFAADSDFKVEER). Cystine bridges form between Cys51–Cys63, Cys56–Cys68, and Cys62–Cys75.

This sequence belongs to the neurotoxin 10 (Hwtx-1) family. 51 (Hntx-8) subfamily. Hntx-8 sub-subfamily. In terms of tissue distribution, expressed by the venom gland.

The protein localises to the secreted. Its function is as follows. Agglutinates erythrocytes. The sequence is that of U5-theraphotoxin-Hs1a 4 from Cyriopagopus schmidti (Chinese bird spider).